A 128-amino-acid chain; its full sequence is Large ribosomal subunit protein bL20 (128 aa).

Belongs to the bacterial ribosomal protein bL20 family.

Functionally, binds directly to 23S ribosomal RNA and is necessary for the in vitro assembly process of the 50S ribosomal subunit. It is not involved in the protein synthesizing functions of that subunit. The sequence is that of Large ribosomal subunit protein bL20 from Kocuria rhizophila (strain ATCC 9341 / DSM 348 / NBRC 103217 / DC2201).